A 421-amino-acid chain; its full sequence is 4-hydroxy-3-methylbut-2-en-1-yl diphosphate synthase (flavodoxin) (421 aa).

Positions 298, 301, 344, and 351 each coordinate [4Fe-4S] cluster.

Belongs to the IspG family. [4Fe-4S] cluster serves as cofactor.

It carries out the reaction (2E)-4-hydroxy-3-methylbut-2-enyl diphosphate + oxidized [flavodoxin] + H2O + 2 H(+) = 2-C-methyl-D-erythritol 2,4-cyclic diphosphate + reduced [flavodoxin]. Its pathway is isoprenoid biosynthesis; isopentenyl diphosphate biosynthesis via DXP pathway; isopentenyl diphosphate from 1-deoxy-D-xylulose 5-phosphate: step 5/6. Converts 2C-methyl-D-erythritol 2,4-cyclodiphosphate (ME-2,4cPP) into 1-hydroxy-2-methyl-2-(E)-butenyl 4-diphosphate. In Neisseria meningitidis serogroup C / serotype 2a (strain ATCC 700532 / DSM 15464 / FAM18), this protein is 4-hydroxy-3-methylbut-2-en-1-yl diphosphate synthase (flavodoxin).